Reading from the N-terminus, the 148-residue chain is Ribonuclease H (148 aa).

Residues alanine 3–glutamate 144 form the RNase H type-1 domain. Residues aspartate 12, glutamate 50, aspartate 72, and aspartate 136 each coordinate Mg(2+). The segment at histidine 129 to glycine 148 is disordered.

The protein belongs to the RNase H family. As to quaternary structure, monomer. The cofactor is Mg(2+).

The protein resides in the cytoplasm. It catalyses the reaction Endonucleolytic cleavage to 5'-phosphomonoester.. Endonuclease that specifically degrades the RNA of RNA-DNA hybrids. This chain is Ribonuclease H, found in Dechloromonas aromatica (strain RCB).